Consider the following 100-residue polypeptide: MAKKSLIYREKKRQKLEKKYHLIRRSSKKEISKIPSLSEKWKIHGKLQSPPRNSAPTRLHRRCFSTGRPRANYRDFGLSGHILREMVHACLLPGATRSSW.

Belongs to the universal ribosomal protein uS14 family. Part of the 30S ribosomal subunit.

The protein localises to the plastid. It is found in the chloroplast. In terms of biological role, binds 16S rRNA, required for the assembly of 30S particles. The protein is Small ribosomal subunit protein uS14c of Olimarabidopsis pumila (Dwarf rocket).